The primary structure comprises 69 residues: MELDARMDDLECRQAFQDDTLQALNDVVVEQQRSIERLQLQVAALIKRLEDVQGLVGEAGEDEAPPPHY.

This sequence belongs to the SlyX family.

This is Protein SlyX homolog from Pseudomonas aeruginosa (strain LESB58).